Reading from the N-terminus, the 188-residue chain is Elongation factor P (188 aa).

This sequence belongs to the elongation factor P family.

Its subcellular location is the cytoplasm. The protein operates within protein biosynthesis; polypeptide chain elongation. Involved in peptide bond synthesis. Stimulates efficient translation and peptide-bond synthesis on native or reconstituted 70S ribosomes in vitro. Probably functions indirectly by altering the affinity of the ribosome for aminoacyl-tRNA, thus increasing their reactivity as acceptors for peptidyl transferase. In Rickettsia conorii (strain ATCC VR-613 / Malish 7), this protein is Elongation factor P (efp).